Here is a 309-residue protein sequence, read N- to C-terminus: Homoserine kinase (309 aa).

91–101 contacts ATP; that stretch reads PIGSGLGSSAC.

It belongs to the GHMP kinase family. Homoserine kinase subfamily.

It is found in the cytoplasm. It carries out the reaction L-homoserine + ATP = O-phospho-L-homoserine + ADP + H(+). Its pathway is amino-acid biosynthesis; L-threonine biosynthesis; L-threonine from L-aspartate: step 4/5. Its function is as follows. Catalyzes the ATP-dependent phosphorylation of L-homoserine to L-homoserine phosphate. This Buchnera aphidicola subsp. Acyrthosiphon pisum (strain 5A) protein is Homoserine kinase.